The following is a 156-amino-acid chain: Putative thymidylate kinase (156 aa).

7 to 14 (GLDGTGKT) contacts ATP.

This sequence belongs to the thymidylate kinase family.

The catalysed reaction is dTMP + ATP = dTDP + ADP. It participates in pyrimidine metabolism; dTTP biosynthesis. In terms of biological role, catalyzes the conversion of dTMP to dTDP. The protein is Putative thymidylate kinase of Acidianus convivator (ABV).